We begin with the raw amino-acid sequence, 382 residues long: Chaperone protein DnaJ (382 aa).

The 66-residue stretch at 5–70 folds into the J domain; that stretch reads DYYEVLGVSR…DKKAAYDRYG (66 aa). The CR-type zinc-finger motif lies at 141–219; that stretch reads GVQKTINVPA…CHGAGRVEKE (79 aa). Positions 154, 157, 171, 174, 193, 196, 207, and 210 each coordinate Zn(2+). CXXCXGXG motif repeat units follow at residues 154–161, 171–178, 193–200, and 207–214; these read CDACKGTG, CPTCSGMG, CPTCNGMG, and CKVCHGAG.

Belongs to the DnaJ family. In terms of assembly, homodimer. Requires Zn(2+) as cofactor.

The protein localises to the cytoplasm. Functionally, participates actively in the response to hyperosmotic and heat shock by preventing the aggregation of stress-denatured proteins and by disaggregating proteins, also in an autonomous, DnaK-independent fashion. Unfolded proteins bind initially to DnaJ; upon interaction with the DnaJ-bound protein, DnaK hydrolyzes its bound ATP, resulting in the formation of a stable complex. GrpE releases ADP from DnaK; ATP binding to DnaK triggers the release of the substrate protein, thus completing the reaction cycle. Several rounds of ATP-dependent interactions between DnaJ, DnaK and GrpE are required for fully efficient folding. Also involved, together with DnaK and GrpE, in the DNA replication of plasmids through activation of initiation proteins. This is Chaperone protein DnaJ from Cereibacter sphaeroides (strain ATCC 17023 / DSM 158 / JCM 6121 / CCUG 31486 / LMG 2827 / NBRC 12203 / NCIMB 8253 / ATH 2.4.1.) (Rhodobacter sphaeroides).